A 643-amino-acid polypeptide reads, in one-letter code: 1-deoxy-D-xylulose-5-phosphate synthase (643 aa).

Thiamine diphosphate-binding positions include histidine 78 and 119 to 121 (AHS). Residue aspartate 150 coordinates Mg(2+). Residues 151–152 (GS), asparagine 179, tyrosine 288, and glutamate 370 each bind thiamine diphosphate. Asparagine 179 serves as a coordination point for Mg(2+).

This sequence belongs to the transketolase family. DXPS subfamily. Homodimer. Requires Mg(2+) as cofactor. Thiamine diphosphate is required as a cofactor.

The catalysed reaction is D-glyceraldehyde 3-phosphate + pyruvate + H(+) = 1-deoxy-D-xylulose 5-phosphate + CO2. Its pathway is metabolic intermediate biosynthesis; 1-deoxy-D-xylulose 5-phosphate biosynthesis; 1-deoxy-D-xylulose 5-phosphate from D-glyceraldehyde 3-phosphate and pyruvate: step 1/1. Catalyzes the acyloin condensation reaction between C atoms 2 and 3 of pyruvate and glyceraldehyde 3-phosphate to yield 1-deoxy-D-xylulose-5-phosphate (DXP). The protein is 1-deoxy-D-xylulose-5-phosphate synthase of Brucella abortus (strain S19).